Consider the following 24-residue polypeptide: Antimicrobial peptide PGQ (24 aa).

Belongs to the gastrin/cholecystokinin family. Magainin subfamily. In terms of tissue distribution, is synthesized in the stomach and stored in a novel granular multinucleated cell in the gastric mucosa. It is stored as active, processed peptides in large granules within the granular gland secretions of the skin.

It is found in the secreted. Functionally, antimicrobial peptide. This chain is Antimicrobial peptide PGQ (pgq), found in Xenopus laevis (African clawed frog).